We begin with the raw amino-acid sequence, 340 residues long: 4-hydroxy-3-methylbut-2-enyl diphosphate reductase (340 aa).

C13 is a binding site for [4Fe-4S] cluster. (2E)-4-hydroxy-3-methylbut-2-enyl diphosphate is bound by residues H42 and H75. 2 residues coordinate dimethylallyl diphosphate: H42 and H75. Residues H42 and H75 each coordinate isopentenyl diphosphate. C97 contributes to the [4Fe-4S] cluster binding site. A (2E)-4-hydroxy-3-methylbut-2-enyl diphosphate-binding site is contributed by H125. H125 provides a ligand contact to dimethylallyl diphosphate. Residue H125 participates in isopentenyl diphosphate binding. E127 functions as the Proton donor in the catalytic mechanism. (2E)-4-hydroxy-3-methylbut-2-enyl diphosphate is bound at residue T165. [4Fe-4S] cluster is bound at residue C195. The (2E)-4-hydroxy-3-methylbut-2-enyl diphosphate site is built by S223, S224, N225, and S267. Residues S223, S224, N225, and S267 each contribute to the dimethylallyl diphosphate site. 4 residues coordinate isopentenyl diphosphate: S223, S224, N225, and S267. The interval 317 to 340 (NNLDNKTAASEEADSLSNDTEQEA) is disordered. A compositionally biased stretch (polar residues) spans 331 to 340 (SLSNDTEQEA).

It belongs to the IspH family. The cofactor is [4Fe-4S] cluster.

The catalysed reaction is isopentenyl diphosphate + 2 oxidized [2Fe-2S]-[ferredoxin] + H2O = (2E)-4-hydroxy-3-methylbut-2-enyl diphosphate + 2 reduced [2Fe-2S]-[ferredoxin] + 2 H(+). It catalyses the reaction dimethylallyl diphosphate + 2 oxidized [2Fe-2S]-[ferredoxin] + H2O = (2E)-4-hydroxy-3-methylbut-2-enyl diphosphate + 2 reduced [2Fe-2S]-[ferredoxin] + 2 H(+). It functions in the pathway isoprenoid biosynthesis; dimethylallyl diphosphate biosynthesis; dimethylallyl diphosphate from (2E)-4-hydroxy-3-methylbutenyl diphosphate: step 1/1. The protein operates within isoprenoid biosynthesis; isopentenyl diphosphate biosynthesis via DXP pathway; isopentenyl diphosphate from 1-deoxy-D-xylulose 5-phosphate: step 6/6. Its function is as follows. Catalyzes the conversion of 1-hydroxy-2-methyl-2-(E)-butenyl 4-diphosphate (HMBPP) into a mixture of isopentenyl diphosphate (IPP) and dimethylallyl diphosphate (DMAPP). Acts in the terminal step of the DOXP/MEP pathway for isoprenoid precursor biosynthesis. The polypeptide is 4-hydroxy-3-methylbut-2-enyl diphosphate reductase (Zymomonas mobilis subsp. mobilis (strain ATCC 31821 / ZM4 / CP4)).